The primary structure comprises 234 residues: Uridylate kinase (234 aa).

Position 9-12 (9-12 (KLSG)) interacts with ATP. UMP is bound at residue Gly51. Residues Gly52 and Arg56 each coordinate ATP. UMP contacts are provided by residues Asp71 and 132–139 (CGNPFFTT). The ATP site is built by Thr159, Tyr165, and Asp168.

Belongs to the UMP kinase family. Homohexamer.

It is found in the cytoplasm. The enzyme catalyses UMP + ATP = UDP + ADP. It participates in pyrimidine metabolism; CTP biosynthesis via de novo pathway; UDP from UMP (UMPK route): step 1/1. With respect to regulation, inhibited by UTP. Catalyzes the reversible phosphorylation of UMP to UDP. The polypeptide is Uridylate kinase (Prochlorococcus marinus subsp. pastoris (strain CCMP1986 / NIES-2087 / MED4)).